Reading from the N-terminus, the 306-residue chain is tRNA dimethylallyltransferase 1 (306 aa).

15 to 22 (GPTGSGKS) lines the ATP pocket. Residue 17–22 (TGSGKS) coordinates substrate. The interaction with substrate tRNA stretch occupies residues 40-43 (DSMQ).

The protein belongs to the IPP transferase family. As to quaternary structure, monomer. It depends on Mg(2+) as a cofactor.

It catalyses the reaction adenosine(37) in tRNA + dimethylallyl diphosphate = N(6)-dimethylallyladenosine(37) in tRNA + diphosphate. Its function is as follows. Catalyzes the transfer of a dimethylallyl group onto the adenine at position 37 in tRNAs that read codons beginning with uridine, leading to the formation of N6-(dimethylallyl)adenosine (i(6)A). This is tRNA dimethylallyltransferase 1 from Citrifermentans bemidjiense (strain ATCC BAA-1014 / DSM 16622 / JCM 12645 / Bem) (Geobacter bemidjiensis).